We begin with the raw amino-acid sequence, 51 residues long: Large ribosomal subunit protein bL33 (51 aa).

Belongs to the bacterial ribosomal protein bL33 family.

This chain is Large ribosomal subunit protein bL33, found in Acinetobacter baylyi (strain ATCC 33305 / BD413 / ADP1).